Here is a 473-residue protein sequence, read N- to C-terminus: Photosystem II CP43 reaction center protein (473 aa).

A propeptide spanning residues Met1–Glu14 is cleaved from the precursor. An N-acetylthreonine modification is found at Thr15. Position 15 is a phosphothreonine (Thr15). 5 helical membrane-spanning segments follow: residues Leu69–Ala93, Leu134–Asn155, Lys178–Thr200, Lys255–Ser275, and Trp291–Ala312. Glu367 contributes to the [CaMn4O5] cluster binding site. Residues Arg447–Pro471 form a helical membrane-spanning segment.

It belongs to the PsbB/PsbC family. PsbC subfamily. In terms of assembly, PSII is composed of 1 copy each of membrane proteins PsbA, PsbB, PsbC, PsbD, PsbE, PsbF, PsbH, PsbI, PsbJ, PsbK, PsbL, PsbM, PsbT, PsbX, PsbY, PsbZ, Psb30/Ycf12, at least 3 peripheral proteins of the oxygen-evolving complex and a large number of cofactors. It forms dimeric complexes. Binds multiple chlorophylls and provides some of the ligands for the Ca-4Mn-5O cluster of the oxygen-evolving complex. It may also provide a ligand for a Cl- that is required for oxygen evolution. PSII binds additional chlorophylls, carotenoids and specific lipids. serves as cofactor.

It is found in the plastid. Its subcellular location is the chloroplast thylakoid membrane. Functionally, one of the components of the core complex of photosystem II (PSII). It binds chlorophyll and helps catalyze the primary light-induced photochemical processes of PSII. PSII is a light-driven water:plastoquinone oxidoreductase, using light energy to abstract electrons from H(2)O, generating O(2) and a proton gradient subsequently used for ATP formation. The protein is Photosystem II CP43 reaction center protein of Coffea arabica (Arabian coffee).